Here is a 458-residue protein sequence, read N- to C-terminus: D-inositol 3-phosphate glycosyltransferase (458 aa).

Residues 1 to 29 (MRADRPGHRSRGINPGPGMFTLVGPDERD) are disordered. Residue histidine 47 coordinates 1D-myo-inositol 3-phosphate. Residues 53-54 (QP) and glycine 61 contribute to the UDP-N-acetyl-alpha-D-glucosamine site. 1D-myo-inositol 3-phosphate-binding positions include 58-63 (DAGGMN), lysine 116, tyrosine 149, threonine 173, and arginine 193. Residues arginine 267, lysine 272, and valine 339 each contribute to the UDP-N-acetyl-alpha-D-glucosamine site. A Mg(2+)-binding site is contributed by alanine 351. Glutamate 361 and glutamate 369 together coordinate UDP-N-acetyl-alpha-D-glucosamine. Threonine 375 contributes to the Mg(2+) binding site.

It belongs to the glycosyltransferase group 1 family. MshA subfamily. As to quaternary structure, homodimer.

It carries out the reaction 1D-myo-inositol 3-phosphate + UDP-N-acetyl-alpha-D-glucosamine = 1D-myo-inositol 2-acetamido-2-deoxy-alpha-D-glucopyranoside 3-phosphate + UDP + H(+). Catalyzes the transfer of a N-acetyl-glucosamine moiety to 1D-myo-inositol 3-phosphate to produce 1D-myo-inositol 2-acetamido-2-deoxy-glucopyranoside 3-phosphate in the mycothiol biosynthesis pathway. This is D-inositol 3-phosphate glycosyltransferase from Nocardioides sp. (strain ATCC BAA-499 / JS614).